A 179-amino-acid polypeptide reads, in one-letter code: Large ribosomal subunit protein bL27c (179 aa).

A chloroplast-targeting transit peptide spans 1-51 (MAVSFSLVGAFKGLSLASSSSFLKGDFGAAFPVAPKFSVSFPLKSPLTIES).

This sequence belongs to the bacterial ribosomal protein bL27 family. Part of the 50S ribosomal subunit.

The protein resides in the plastid. It is found in the chloroplast. This chain is Large ribosomal subunit protein bL27c (RPL27), found in Nicotiana tabacum (Common tobacco).